The sequence spans 492 residues: Serine carboxypeptidase-like 31 (492 aa).

Positions methionine 1–cysteine 30 are cleaved as a signal peptide. 3 disulfides stabilise this stretch: cysteine 105–cysteine 376, cysteine 270–cysteine 283, and cysteine 307–cysteine 344. Asparagine 156 carries an N-linked (GlcNAc...) asparagine glycan. Serine 198 is an active-site residue. Residues asparagine 221 and asparagine 271 are each glycosylated (N-linked (GlcNAc...) asparagine). 2 N-linked (GlcNAc...) asparagine glycosylation sites follow: asparagine 372 and asparagine 383. Active-site residues include aspartate 413 and histidine 465.

Belongs to the peptidase S10 family. Expressed in roots, senescent leaves, stems, flowers and siliques.

It is found in the secreted. Its function is as follows. Probable carboxypeptidase. In Arabidopsis thaliana (Mouse-ear cress), this protein is Serine carboxypeptidase-like 31 (SCPL31).